Here is a 363-residue protein sequence, read N- to C-terminus: UDP-N-acetylglucosamine--N-acetylmuramyl-(pentapeptide) pyrophosphoryl-undecaprenol N-acetylglucosamine transferase (363 aa).

UDP-N-acetyl-alpha-D-glucosamine contacts are provided by residues 14–16 (TGG), Arg171, Ser200, and Gln290.

It belongs to the glycosyltransferase 28 family. MurG subfamily.

The protein resides in the cell inner membrane. It carries out the reaction di-trans,octa-cis-undecaprenyl diphospho-N-acetyl-alpha-D-muramoyl-L-alanyl-D-glutamyl-meso-2,6-diaminopimeloyl-D-alanyl-D-alanine + UDP-N-acetyl-alpha-D-glucosamine = di-trans,octa-cis-undecaprenyl diphospho-[N-acetyl-alpha-D-glucosaminyl-(1-&gt;4)]-N-acetyl-alpha-D-muramoyl-L-alanyl-D-glutamyl-meso-2,6-diaminopimeloyl-D-alanyl-D-alanine + UDP + H(+). It participates in cell wall biogenesis; peptidoglycan biosynthesis. Functionally, cell wall formation. Catalyzes the transfer of a GlcNAc subunit on undecaprenyl-pyrophosphoryl-MurNAc-pentapeptide (lipid intermediate I) to form undecaprenyl-pyrophosphoryl-MurNAc-(pentapeptide)GlcNAc (lipid intermediate II). The protein is UDP-N-acetylglucosamine--N-acetylmuramyl-(pentapeptide) pyrophosphoryl-undecaprenol N-acetylglucosamine transferase of Borreliella afzelii (strain PKo) (Borrelia afzelii).